A 159-amino-acid polypeptide reads, in one-letter code: Putative phosphatidylinositol-3-phosphatase (159 aa).

A signal peptide spans 1–16; sequence MKRPSFLPVLIGTGFG. Transmembrane regions (helical) follow at residues 30-50, 54-74, 104-124, and 134-154; these read LLASIIWIALYFLLPFTALLW, ALVVLFTFAGIWAANKLESCW, WYVIAAFALFRIFDIVKPLGV, and VGVMMDDVLAGVYSFILIAVA.

The protein localises to the membrane. The catalysed reaction is a 1,2-diacyl-sn-glycero-3-phospho-(1D-myo-inositol-3-phosphate) + H2O = a 1,2-diacyl-sn-glycero-3-phospho-(1D-myo-inositol) + phosphate. In terms of biological role, may be responsible for the conversion of phosphatidylinositol phosphate diacylglycerol (PIP-DAG) to phosphatidylinositol diacylglycerol (PI-DAG), making it a key enzyme in the inositol glycerophospholipid biosynthesis pathway. This Bacteroides thetaiotaomicron (strain ATCC 29148 / DSM 2079 / JCM 5827 / CCUG 10774 / NCTC 10582 / VPI-5482 / E50) protein is Putative phosphatidylinositol-3-phosphatase.